The sequence spans 101 residues: Small ribosomal subunit protein uS14 (101 aa).

It belongs to the universal ribosomal protein uS14 family. In terms of assembly, part of the 30S ribosomal subunit. Contacts proteins S3 and S10.

Functionally, binds 16S rRNA, required for the assembly of 30S particles and may also be responsible for determining the conformation of the 16S rRNA at the A site. The polypeptide is Small ribosomal subunit protein uS14 (Rhizobium etli (strain CIAT 652)).